We begin with the raw amino-acid sequence, 364 residues long: Developmentally-regulated GTP-binding protein 2 (364 aa).

K21 bears the (3S)-3-hydroxylysine mark. The OBG-type G domain occupies 63 to 288 (ARVALIGFPS…LLEMLWEYLA (226 aa)). Residues 69-76 (GFPSVGKS), 94-98 (FTTLT), 115-118 (DLPG), 246-249 (NKID), and 269-271 (SCG) contribute to the GTP site. S76 and T96 together coordinate Mg(2+). The 76-residue stretch at 288-363 (ALTCIYTKKR…EHEDVIQIVK (76 aa)) folds into the TGS domain.

Belongs to the TRAFAC class OBG-HflX-like GTPase superfamily. OBG GTPase family. As to quaternary structure, interacts with RWDD1; this interaction confers protection to polyubiquitination and proteolytic degradation. Interacts with JMJD7; this interaction is direct. The cofactor is Mg(2+). In terms of processing, hydroxylated (with S stereochemistry) at C-3 of Lys-21 by JMJD7; this modification hinders trypsin-catalyzed proteolysis in vitro. Polyubiquitinated. Highest levels in skeletal muscle, heart and kidney. Low levels in colon, thymus, spleen, small intestine, lung and Leukocytes.

The protein resides in the nucleus. Its subcellular location is the cytoplasm. The catalysed reaction is GTP + H2O = GDP + phosphate + H(+). Functionally, catalyzes the conversion of GTP to GDP through hydrolysis of the gamma-phosphate bond in GTP. When hydroxylated at C-3 of 'Lys-21' by JMJD7, may bind to RNA and play a role in translation. The polypeptide is Developmentally-regulated GTP-binding protein 2 (Homo sapiens (Human)).